The following is a 213-amino-acid chain: High frequency lysogenization protein HflD (213 aa).

A coiled-coil region spans residues 79-126 (QGLNAELTRYTLSLMVLERKLSSAKGALDTLGNRINGLQRQLEHFDLQ).

The protein belongs to the HflD family. As to quaternary structure, interacts with CII protein from phage lambda.

Its subcellular location is the cytoplasm. The protein resides in the cell inner membrane. Functionally, negative regulator of phage lambda lysogenization. Contributes to the degradation of the phage regulatory protein CII. Acts probably by holding CII on the membrane surface, away from the target promoters, but close to the FtsH protease. This chain is High frequency lysogenization protein HflD, found in Escherichia coli O127:H6 (strain E2348/69 / EPEC).